Here is a 326-residue protein sequence, read N- to C-terminus: Delta-aminolevulinic acid dehydratase (326 aa).

Cys119, Cys121, and Cys129 together coordinate Zn(2+). Lys198 acts as the Schiff-base intermediate with substrate in catalysis. 5-aminolevulinate is bound by residues Arg208 and Arg220. Glu236 is a binding site for Mg(2+). Lys251 acts as the Schiff-base intermediate with substrate in catalysis. 5-aminolevulinate contacts are provided by Ser277 and Tyr316.

Belongs to the ALAD family. Homooctamer. Zn(2+) serves as cofactor.

The catalysed reaction is 2 5-aminolevulinate = porphobilinogen + 2 H2O + H(+). It functions in the pathway porphyrin-containing compound metabolism; protoporphyrin-IX biosynthesis; coproporphyrinogen-III from 5-aminolevulinate: step 1/4. In terms of biological role, catalyzes an early step in the biosynthesis of tetrapyrroles. Binds two molecules of 5-aminolevulinate per subunit, each at a distinct site, and catalyzes their condensation to form porphobilinogen. The chain is Delta-aminolevulinic acid dehydratase (hemB) from Synechococcus elongatus (strain ATCC 33912 / PCC 7942 / FACHB-805) (Anacystis nidulans R2).